A 134-amino-acid polypeptide reads, in one-letter code: Small ribosomal subunit protein uS11 (134 aa).

Belongs to the universal ribosomal protein uS11 family. In terms of assembly, part of the 30S ribosomal subunit. Interacts with proteins S7 and S18. Binds to IF-3.

Its function is as follows. Located on the platform of the 30S subunit, it bridges several disparate RNA helices of the 16S rRNA. Forms part of the Shine-Dalgarno cleft in the 70S ribosome. In Salinibacter ruber (strain DSM 13855 / M31), this protein is Small ribosomal subunit protein uS11.